Here is a 77-residue protein sequence, read N- to C-terminus: MANIKSAIKRAELNVKANEKNSAQKSAMRTAIKAFEANPTEELFRAASSSIDKAESKGLIHANKASRDKARLAAKLG.

This sequence belongs to the bacterial ribosomal protein bS20 family.

Its function is as follows. Binds directly to 16S ribosomal RNA. This is Small ribosomal subunit protein bS20 from Streptococcus uberis (strain ATCC BAA-854 / 0140J).